Consider the following 328-residue polypeptide: Sulfate adenylyltransferase subunit 2 (328 aa).

The tract at residues E305–F328 is disordered.

This sequence belongs to the PAPS reductase family. CysD subfamily. Heterodimer composed of CysD, the smaller subunit, and CysN.

It catalyses the reaction sulfate + ATP + H(+) = adenosine 5'-phosphosulfate + diphosphate. It functions in the pathway sulfur metabolism; hydrogen sulfide biosynthesis; sulfite from sulfate: step 1/3. Its function is as follows. With CysN forms the ATP sulfurylase (ATPS) that catalyzes the adenylation of sulfate producing adenosine 5'-phosphosulfate (APS) and diphosphate, the first enzymatic step in sulfur assimilation pathway. APS synthesis involves the formation of a high-energy phosphoric-sulfuric acid anhydride bond driven by GTP hydrolysis by CysN coupled to ATP hydrolysis by CysD. This is Sulfate adenylyltransferase subunit 2 from Rhodopseudomonas palustris (strain BisB18).